Consider the following 195-residue polypeptide: Glucagon family neuropeptides (195 aa).

A signal peptide spans 1-20; sequence MAKSSRATLALLIYGILMRY. The propeptide occupies 21–82; the sequence is SQCTPIGMGF…YYPPERRAET (62 aa). The disordered stretch occupies residues 113 to 132; sequence VGEEEEDEEDSEPLSKRHSD. The segment covering 115–124 has biased composition (acidic residues); it reads EEEEDEEDSE. At Lys-167 the chain carries Lysine amide. The propeptide occupies 171–195; the sequence is LVVPSVWTGIRDTVIITPEKRGKRY.

This sequence belongs to the glucagon family. As to expression, brain, testis, ovary and stomach. Not pancreas, pituitary, muscle and liver.

It is found in the secreted. Its function is as follows. Primary role of GHRH is to release GH from the pituitary. PACAP plays pivotal roles as a neurotransmitter and/or a neuromodulator. The polypeptide is Glucagon family neuropeptides (Clarias macrocephalus (Bighead catfish)).